The chain runs to 125 residues: Small ribosomal subunit protein uS13 (125 aa).

Residues 95–125 (GLPVNGQRTRTNARTRKGGKKTVANKKKVTK) are disordered. The segment covering 105–125 (TNARTRKGGKKTVANKKKVTK) has biased composition (basic residues).

The protein belongs to the universal ribosomal protein uS13 family. Part of the 30S ribosomal subunit. Forms a loose heterodimer with protein S19. Forms two bridges to the 50S subunit in the 70S ribosome.

Its function is as follows. Located at the top of the head of the 30S subunit, it contacts several helices of the 16S rRNA. In the 70S ribosome it contacts the 23S rRNA (bridge B1a) and protein L5 of the 50S subunit (bridge B1b), connecting the 2 subunits; these bridges are implicated in subunit movement. Contacts the tRNAs in the A and P-sites. This chain is Small ribosomal subunit protein uS13, found in Leptospira borgpetersenii serovar Hardjo-bovis (strain L550).